A 596-amino-acid chain; its full sequence is Phosphomethylpyrimidine synthase 1 (596 aa).

Substrate-binding positions include asparagine 228, methionine 257, tyrosine 286, histidine 322, 342–344 (SRG), 383–386 (DGLR), and glutamate 422. Histidine 426 serves as a coordination point for Zn(2+). Tyrosine 449 serves as a coordination point for substrate. Residue histidine 490 participates in Zn(2+) binding. [4Fe-4S] cluster is bound by residues cysteine 570, cysteine 573, and cysteine 578.

This sequence belongs to the ThiC family. Homodimer. It depends on [4Fe-4S] cluster as a cofactor.

The enzyme catalyses 5-amino-1-(5-phospho-beta-D-ribosyl)imidazole + S-adenosyl-L-methionine = 4-amino-2-methyl-5-(phosphooxymethyl)pyrimidine + CO + 5'-deoxyadenosine + formate + L-methionine + 3 H(+). Its pathway is cofactor biosynthesis; thiamine diphosphate biosynthesis. In terms of biological role, catalyzes the synthesis of the hydroxymethylpyrimidine phosphate (HMP-P) moiety of thiamine from aminoimidazole ribotide (AIR) in a radical S-adenosyl-L-methionine (SAM)-dependent reaction. The protein is Phosphomethylpyrimidine synthase 1 of Syntrophotalea carbinolica (strain DSM 2380 / NBRC 103641 / GraBd1) (Pelobacter carbinolicus).